We begin with the raw amino-acid sequence, 37 residues long: Large ribosomal subunit protein bL36c (37 aa).

It belongs to the bacterial ribosomal protein bL36 family.

Its subcellular location is the plastid. The protein localises to the chloroplast. The chain is Large ribosomal subunit protein bL36c from Huperzia lucidula (Shining clubmoss).